Reading from the N-terminus, the 72-residue chain is Large ribosomal subunit protein bL31c (72 aa).

Belongs to the bacterial ribosomal protein bL31 family. Type A subfamily. In terms of assembly, part of the 50S ribosomal subunit.

The protein resides in the plastid. It is found in the chloroplast. Binds the 23S rRNA. The sequence is that of Large ribosomal subunit protein bL31c from Trieres chinensis (Marine centric diatom).